A 931-amino-acid polypeptide reads, in one-letter code: Probable UDP-N-acetylglucosamine--peptide N-acetylglucosaminyltransferase SPINDLY (931 aa).

The span at 1 to 15 (MAWTEKDVENGKESE) shows a compositional bias: basic and acidic residues. The disordered stretch occupies residues 1–38 (MAWTEKDVENGKESESLGNNGFLKGGQSSSGSKGSPGR). The span at 25–37 (GGQSSSGSKGSPG) shows a compositional bias: low complexity. TPR repeat units lie at residues 48–81 (DKDA…DSKS), 82–115 (IESL…DPQN), 116–149 (ACAL…DPSY), 157–190 (AIVL…DSHY), 191–224 (APAY…RPMY), 225–258 (AEAY…SPNF), 266–299 (AIAL…NWHY), 300–333 (ADAM…NPHC), 334–367 (AEAC…KPNF), 369–401 (QSLN…NPTY), and 402–435 (AEAY…DPDS). The interval 436–931 (RNAGQNRLLA…NHNGNHGNLS (496 aa)) is catalytic region. Over residues 864–884 (QQQQTQTESVVPEESSVNPSE) the composition is skewed to low complexity. Positions 864-931 (QQQQTQTESV…NHNGNHGNLS (68 aa)) are disordered. Over residues 910 to 931 (KSSTSEENGVQSNHNGNHGNLS) the composition is skewed to polar residues.

The protein belongs to the glycosyltransferase 41 family. O-GlcNAc transferase subfamily.

The protein resides in the nucleus. The enzyme catalyses L-seryl-[protein] + UDP-N-acetyl-alpha-D-glucosamine = 3-O-(N-acetyl-beta-D-glucosaminyl)-L-seryl-[protein] + UDP + H(+). It catalyses the reaction L-threonyl-[protein] + UDP-N-acetyl-alpha-D-glucosamine = 3-O-(N-acetyl-beta-D-glucosaminyl)-L-threonyl-[protein] + UDP + H(+). Its pathway is protein modification; protein glycosylation. Its function is as follows. Probable O-linked N-acetylglucosamine transferase (OGT) involved in various processes such as gibberellin (GA) signaling pathway. OGTs catalyze the addition of nucleotide-activated sugars directly onto the polypeptide through O-glycosidic linkage with the hydroxyl of serine or threonine. Probably acts by adding O-linked sugars to yet unknown proteins. The chain is Probable UDP-N-acetylglucosamine--peptide N-acetylglucosaminyltransferase SPINDLY (SPY) from Solanum lycopersicum (Tomato).